The chain runs to 545 residues: Phenylalanine--tRNA ligase beta subunit (545 aa).

The 76-residue stretch at Phe268–Pro343 folds into the B5 domain. Residues Asp321, Asp327, Glu330, and Asp331 each coordinate Mg(2+).

This sequence belongs to the phenylalanyl-tRNA synthetase beta subunit family. Type 2 subfamily. As to quaternary structure, tetramer of two alpha and two beta subunits. Requires Mg(2+) as cofactor.

Its subcellular location is the cytoplasm. The catalysed reaction is tRNA(Phe) + L-phenylalanine + ATP = L-phenylalanyl-tRNA(Phe) + AMP + diphosphate + H(+). This is Phenylalanine--tRNA ligase beta subunit from Saccharolobus islandicus (strain Y.N.15.51 / Yellowstone #2) (Sulfolobus islandicus).